The primary structure comprises 37 residues: Photosystem I reaction center subunit VIII (37 aa).

A helical membrane pass occupies residues 7–27; that stretch reads LPSFFVPLVGLVFPAIAMASL.

This sequence belongs to the PsaI family.

The protein resides in the plastid. It is found in the chloroplast thylakoid membrane. Functionally, may help in the organization of the PsaL subunit. In Eucalyptus globulus subsp. globulus (Tasmanian blue gum), this protein is Photosystem I reaction center subunit VIII.